Here is a 321-residue protein sequence, read N- to C-terminus: UPF0676 protein C1494.01 (321 aa).

The 109-residue stretch at Glu-159 to Pro-267 folds into the Fe2OG dioxygenase domain.

The protein belongs to the UPF0676 family.

It is found in the cytoplasm. It localises to the nucleus. This Schizosaccharomyces pombe (strain 972 / ATCC 24843) (Fission yeast) protein is UPF0676 protein C1494.01.